Reading from the N-terminus, the 439-residue chain is Omega-aminotransferase (439 aa).

Residue 112–113 (GS) coordinates pyridoxal 5'-phosphate. At Lys-281 the chain carries N6-(pyridoxal phosphate)lysine. Thr-318 lines the pyridoxal 5'-phosphate pocket.

This sequence belongs to the class-III pyridoxal-phosphate-dependent aminotransferase family. Homotetramer. Requires pyridoxal 5'-phosphate as cofactor.

It catalyses the reaction 3-oxopropanoate + L-alanine = beta-alanine + pyruvate. The enzyme catalyses 3-aminobutanoate + pyruvate = acetoacetate + L-alanine. It carries out the reaction benzylamine + pyruvate = benzaldehyde + L-alanine. The catalysed reaction is (S)-1-phenylethylamine + pyruvate = acetophenone + L-alanine. It catalyses the reaction 2-phenylethylamine + pyruvate = 2-phenylacetaldehyde + L-alanine. The enzyme catalyses 1-phenylpropylamine + pyruvate = 1-phenylpropan-1-one + L-alanine. It carries out the reaction 3-phenylpropylamine + pyruvate = 3-phenylpropanal + L-alanine. Functionally, aminotransferase that can use beta-amino acids, aliphatic amines, or aromatic amines as amino donors, and pyruvate as amino acceptor. Shows high activity for short-chain beta-amino acids, with the highest activity for 3-aminobutanoate and beta-alanine in vitro. Displays higher activity toward aromatic amines than aliphatic amines. May be involved in beta-alanine biosynthesis and/or degradation. The chain is Omega-aminotransferase from Caulobacter vibrioides (strain ATCC 19089 / CIP 103742 / CB 15) (Caulobacter crescentus).